The primary structure comprises 465 residues: UDP-N-acetylmuramate--L-alanine ligase (465 aa).

112 to 118 (GTHGKTT) provides a ligand contact to ATP.

Belongs to the MurCDEF family.

It localises to the cytoplasm. The enzyme catalyses UDP-N-acetyl-alpha-D-muramate + L-alanine + ATP = UDP-N-acetyl-alpha-D-muramoyl-L-alanine + ADP + phosphate + H(+). It functions in the pathway cell wall biogenesis; peptidoglycan biosynthesis. In terms of biological role, cell wall formation. This Burkholderia lata (strain ATCC 17760 / DSM 23089 / LMG 22485 / NCIMB 9086 / R18194 / 383) protein is UDP-N-acetylmuramate--L-alanine ligase.